The following is a 647-amino-acid chain: Acetyl-coenzyme A synthetase (647 aa).

CoA is bound by residues Arg-190–Lys-193, Thr-310, and Asn-334. ATP-binding positions include Gly-386–Pro-388, Asp-410–Thr-415, Asp-499, and Arg-514. Ser-522 contacts CoA. Arg-525 lines the ATP pocket. 3 residues coordinate Mg(2+): Val-536, His-538, and Val-541. Arg-583 is a binding site for CoA. Lys-608 carries the N6-acetyllysine modification.

It belongs to the ATP-dependent AMP-binding enzyme family. It depends on Mg(2+) as a cofactor. Acetylated. Deacetylation by the SIR2-homolog deacetylase activates the enzyme.

The catalysed reaction is acetate + ATP + CoA = acetyl-CoA + AMP + diphosphate. Functionally, catalyzes the conversion of acetate into acetyl-CoA (AcCoA), an essential intermediate at the junction of anabolic and catabolic pathways. AcsA undergoes a two-step reaction. In the first half reaction, AcsA combines acetate with ATP to form acetyl-adenylate (AcAMP) intermediate. In the second half reaction, it can then transfer the acetyl group from AcAMP to the sulfhydryl group of CoA, forming the product AcCoA. This is Acetyl-coenzyme A synthetase from Xanthomonas campestris pv. campestris (strain 8004).